We begin with the raw amino-acid sequence, 152 residues long: Regulatory protein RecX (152 aa).

This sequence belongs to the RecX family.

Its subcellular location is the cytoplasm. Its function is as follows. Modulates RecA activity. This chain is Regulatory protein RecX, found in Haemophilus influenzae (strain PittEE).